The sequence spans 440 residues: Argininosuccinate lyase (440 aa).

It belongs to the lyase 1 family. Argininosuccinate lyase subfamily.

It localises to the cytoplasm. The enzyme catalyses 2-(N(omega)-L-arginino)succinate = fumarate + L-arginine. The protein operates within amino-acid biosynthesis; L-arginine biosynthesis; L-arginine from L-ornithine and carbamoyl phosphate: step 3/3. The chain is Argininosuccinate lyase from Clostridium botulinum (strain Kyoto / Type A2).